Reading from the N-terminus, the 285-residue chain is MSIVLRLLSVLKHQQNKMQLDLSVNSYKLLDYSMEWSSDSVVLPPTSSDKTVMMPAKATSSRKRHRKPKLQYAKRRFSPVNPNDLVLVQQEPTHCVRLVFPLSKRWIHFDGLVYSLARLNVSMTVDYHVTLALIYAPEAGECFGNFLHLCPLLKDCLLEFKKLCVLGKTLTILASEWPFFTDVKKNKDNLTVPKAVEWLKEHGYEIYNSQLPLHMSLAKLHDLPQAQFAEAAGLCHYFDPREFALPCALEVVKIGGGKVNGRSIPLARFPINNEFKFIPYLYQCV.

The protein localises to the host nucleus. The protein resides in the host nucleolus. It localises to the host cytoplasm. Functionally, plays a role in the inhibition of host innate immunity by inhibiting the interaction between host IKBKE and MAVS. In turn, this inhibition prevents the production of host interferon beta. Additionally, may also interfere with host antiviral response within the nucleus. The protein is Non-structural protein ORF4b (ORF4b) of Tylonycteris pachypus (Lesser bamboo bat).